We begin with the raw amino-acid sequence, 665 residues long: Chaperone protein dnaK1 (665 aa).

The residue at position 198 (Thr198) is a Phosphothreonine; by autocatalysis. The interval 634-665 is disordered; the sequence is DDPWDNQMNSNSRNSRYGNSRDDDPWDNDYFL. Low complexity predominate over residues 642–651; that stretch reads NSNSRNSRYG.

Belongs to the heat shock protein 70 family.

Acts as a chaperone. The polypeptide is Chaperone protein dnaK1 (dnaK1) (Prochlorococcus marinus subsp. pastoris (strain CCMP1986 / NIES-2087 / MED4)).